The sequence spans 148 residues: Large ribosomal subunit protein bL9 (148 aa).

It belongs to the bacterial ribosomal protein bL9 family.

Binds to the 23S rRNA. The chain is Large ribosomal subunit protein bL9 from Aeromonas salmonicida (strain A449).